Consider the following 339-residue polypeptide: Serpentine receptor class gamma-7 (339 aa).

Helical transmembrane passes span 30 to 50 (YWIQCLWLIPTLFLLVWIIIT), 65 to 85 (WILTADCVVSIILILLDLFVV), 98 to 118 (FSTIFINYPIISDIYFPIYNY), 152 to 172 (IPLFLTIICILPILVVWNTVI), 200 to 220 (LHLTFIFVSISFILISSLLLM), 239 to 259 (SIFIIVAFFFQAAFQSFYAFF), and 268 to 288 (FLVDFQFIIYDVMTVGYPLIF). Residues 319–339 (PFNNTMPRQESPSPNYDSILA) are disordered.

The protein belongs to the nematode receptor-like protein srg family.

The protein localises to the membrane. The chain is Serpentine receptor class gamma-7 (srg-7) from Caenorhabditis elegans.